Consider the following 185-residue polypeptide: Elongation factor P (185 aa).

The protein belongs to the elongation factor P family.

The protein resides in the cytoplasm. It participates in protein biosynthesis; polypeptide chain elongation. Its function is as follows. Involved in peptide bond synthesis. Stimulates efficient translation and peptide-bond synthesis on native or reconstituted 70S ribosomes in vitro. Probably functions indirectly by altering the affinity of the ribosome for aminoacyl-tRNA, thus increasing their reactivity as acceptors for peptidyl transferase. This chain is Elongation factor P (efp), found in Thermotoga maritima (strain ATCC 43589 / DSM 3109 / JCM 10099 / NBRC 100826 / MSB8).